A 47-amino-acid polypeptide reads, in one-letter code: Protein RL9A (47 aa).

A helical membrane pass occupies residues cysteine 27–leucine 47.

It localises to the host membrane. This is Protein RL9A (RL9A) from Human cytomegalovirus (strain Merlin) (HHV-5).